The primary structure comprises 83 residues: U5-theraphotoxin-Hs1a 6 (83 aa).

A signal peptide spans 1–21; sequence MKTSMFLTLTGLVLLFVVCYA. Positions 22 to 49 are excised as a propeptide; it reads SESEEKEFPKELLSSIFAADSDFKVEER. Cystine bridges form between Cys-51-Cys-63, Cys-56-Cys-68, and Cys-62-Cys-75.

The protein belongs to the neurotoxin 10 (Hwtx-1) family. 51 (Hntx-8) subfamily. Hntx-8 sub-subfamily. Expressed by the venom gland.

Its subcellular location is the secreted. In terms of biological role, agglutinates erythrocytes. This chain is U5-theraphotoxin-Hs1a 6, found in Cyriopagopus schmidti (Chinese bird spider).